Here is a 413-residue protein sequence, read N- to C-terminus: Gamma-DL-glutamyl hydrolase (413 aa).

The first 32 residues, 1–32, serve as a signal peptide directing secretion; the sequence is MNTLANWKKFLLVAVIICFLVPIMTKAEIAEA. NlpC/P60 domains lie at 33–159, 163–287, and 291–413; these read DTSS…RRIA, ATAD…RRFD, and IPKE…IRVQ. Residue C194 is the Nucleophile of the active site. Catalysis depends on H247, which acts as the Proton acceptor. Q259 is a catalytic residue.

Belongs to the peptidase C40 family.

Its subcellular location is the secreted. The protein localises to the cell wall. Inhibited by pretreatment with 1 mM 4-(hydroxymercuri)benzoate, a sulfhydryl inhibitor. Functionally, cleaves, in an endo-type manner, the gamma-glutamyl bond between D-glutamate and L-glutamate of poly-gamma-glutamate (PGA). This is Gamma-DL-glutamyl hydrolase (pgdS) from Bacillus subtilis (strain 168).